A 719-amino-acid polypeptide reads, in one-letter code: Fatty acid oxidation complex subunit alpha (719 aa).

The tract at residues 1 to 190 (MVYQGNRITV…KLGLVDATVA (190 aa)) is enoyl-CoA hydratase/isomerase. Substrate is bound at residue Asp298. Residues 313-719 (HDINEAAVLG…AAGETFYATA (407 aa)) form a 3-hydroxyacyl-CoA dehydrogenase region. NAD(+) is bound by residues Met326, Asp345, 402 to 404 (VVE), Lys409, and Ser431. His452 (for 3-hydroxyacyl-CoA dehydrogenase activity) is an active-site residue. Asn455 lines the NAD(+) pocket. Position 502 (Asn502) interacts with substrate.

The protein in the N-terminal section; belongs to the enoyl-CoA hydratase/isomerase family. It in the C-terminal section; belongs to the 3-hydroxyacyl-CoA dehydrogenase family. Heterotetramer of two alpha chains (FadB) and two beta chains (FadA).

The enzyme catalyses a (3S)-3-hydroxyacyl-CoA + NAD(+) = a 3-oxoacyl-CoA + NADH + H(+). The catalysed reaction is a (3S)-3-hydroxyacyl-CoA = a (2E)-enoyl-CoA + H2O. It carries out the reaction a 4-saturated-(3S)-3-hydroxyacyl-CoA = a (3E)-enoyl-CoA + H2O. It catalyses the reaction (3S)-3-hydroxybutanoyl-CoA = (3R)-3-hydroxybutanoyl-CoA. The enzyme catalyses a (3Z)-enoyl-CoA = a 4-saturated (2E)-enoyl-CoA. The catalysed reaction is a (3E)-enoyl-CoA = a 4-saturated (2E)-enoyl-CoA. Its pathway is lipid metabolism; fatty acid beta-oxidation. Involved in the aerobic and anaerobic degradation of long-chain fatty acids via beta-oxidation cycle. Catalyzes the formation of 3-oxoacyl-CoA from enoyl-CoA via L-3-hydroxyacyl-CoA. It can also use D-3-hydroxyacyl-CoA and cis-3-enoyl-CoA as substrate. This chain is Fatty acid oxidation complex subunit alpha, found in Psychrobacter cryohalolentis (strain ATCC BAA-1226 / DSM 17306 / VKM B-2378 / K5).